An 80-amino-acid polypeptide reads, in one-letter code: Probable antimicrobial peptide clone Con10 (80 aa).

Residues 1 to 24 (MQYKTKTFLVIFLAYLVVTNEAEA) form the signal peptide. Residues 56 to 80 (EIEDFFDPYQRELDLELERLLSQLQ) constitute a propeptide that is removed on maturation.

Belongs to the non-disulfide-bridged peptide (NDBP) superfamily. Medium-length antimicrobial peptide (group 3) family. As to expression, expressed by the venom gland.

It is found in the secreted. The protein localises to the target cell membrane. Antimicrobial peptide. Has antifungal activity against all strains tested (MIC=12.5-200 uM). May act by disrupting the integrity of the bacterial cell membrane. The protein is Probable antimicrobial peptide clone Con10 of Opisthacanthus cayaporum (South American scorpion).